The primary structure comprises 121 residues: Thioredoxin-like protein (121 aa).

One can recognise a Thioredoxin domain in the interval 2–112 (VHHITSNDEL…LGAAAEKLGG (111 aa)). C30 and C33 form a disulfide bridge.

The protein belongs to the thioredoxin family.

In terms of biological role, participates in various redox reactions through the reversible oxidation of its active center dithiol to a disulfide and catalyzes dithiol-disulfide exchange reactions. The chain is Thioredoxin-like protein from Fusarium culmorum.